We begin with the raw amino-acid sequence, 842 residues long: Alpha-glucan phosphorylase, H isozyme (842 aa).

At K688 the chain carries N6-(pyridoxal phosphate)lysine.

The protein belongs to the glycogen phosphorylase family. Pyridoxal 5'-phosphate is required as a cofactor.

Its subcellular location is the cytoplasm. It catalyses the reaction [(1-&gt;4)-alpha-D-glucosyl](n) + phosphate = [(1-&gt;4)-alpha-D-glucosyl](n-1) + alpha-D-glucose 1-phosphate. Its function is as follows. Phosphorylase is an important allosteric enzyme in carbohydrate metabolism. Enzymes from different sources differ in their regulatory mechanisms and in their natural substrates. However, all known phosphorylases share catalytic and structural properties. Functionally, the H isoform exhibits higher affinity for branched polyglucans such as soluble starch or glycogen. In Vicia faba (Broad bean), this protein is Alpha-glucan phosphorylase, H isozyme.